Consider the following 472-residue polypeptide: MHRVRFAPSPTGFLHIGSARTYIFNWLFARHHGGTMILRIDDTDVGRNSDASETSIFDGLAWLGLDWDEQYRQSERLPLHRAMADAILTKGMAYRDFTPAQAGDSEKSGAQGTWLFNAGMRELSREESDRRAAAGEPFALRFRVPHDREGSVQFTDAVYGEQAKGYGDIEDFALLRSDGMPTYHLANCADDADLRISHIIRGQEHLSNAFKHKLIFDAAGAESPTFAHLPLLMAPDGMKLSKRVHGPVVSVTTYRDAGFLPQAFINFLSLLGWSPKNDREKLSREEMVELFTLEGINRANAVVNFTEEEPFDAKALWLNAEHIRAMPAADLARELLPFVPVDLEKMLQITPLIQERIKLLRDVQSVADFFFVKQLPPYDSAELIPKKGDAAMAKNVLIKACDVLATAEFTHDGLEVALRAASAELGIKAGQMFEPVRVAVCGRKTAPPLFGTLEVLGREACLARIGQAIEKL.

Residues 8 to 18 (PSPTGFLHIGS) carry the 'HIGH' region motif. The 'KMSKS' region signature appears at 239-243 (KLSKR). ATP is bound at residue lysine 242.

It belongs to the class-I aminoacyl-tRNA synthetase family. Glutamate--tRNA ligase type 1 subfamily. As to quaternary structure, monomer.

It localises to the cytoplasm. The catalysed reaction is tRNA(Glu) + L-glutamate + ATP = L-glutamyl-tRNA(Glu) + AMP + diphosphate. In terms of biological role, catalyzes the attachment of glutamate to tRNA(Glu) in a two-step reaction: glutamate is first activated by ATP to form Glu-AMP and then transferred to the acceptor end of tRNA(Glu). This is Glutamate--tRNA ligase from Solibacter usitatus (strain Ellin6076).